The sequence spans 311 residues: N-acetyl-gamma-glutamyl-phosphate reductase (311 aa).

C117 is a catalytic residue.

It belongs to the NAGSA dehydrogenase family. Type 2 subfamily.

It is found in the cytoplasm. It carries out the reaction N-acetyl-L-glutamate 5-semialdehyde + phosphate + NADP(+) = N-acetyl-L-glutamyl 5-phosphate + NADPH + H(+). It participates in amino-acid biosynthesis; L-arginine biosynthesis; N(2)-acetyl-L-ornithine from L-glutamate: step 3/4. Functionally, catalyzes the NADPH-dependent reduction of N-acetyl-5-glutamyl phosphate to yield N-acetyl-L-glutamate 5-semialdehyde. This chain is N-acetyl-gamma-glutamyl-phosphate reductase, found in Brucella anthropi (strain ATCC 49188 / DSM 6882 / CCUG 24695 / JCM 21032 / LMG 3331 / NBRC 15819 / NCTC 12168 / Alc 37) (Ochrobactrum anthropi).